The following is a 137-amino-acid chain: SPbeta prophage-derived uncharacterized protein YoqU (137 aa).

The protein is SPbeta prophage-derived uncharacterized protein YoqU (yoqU) of Bacillus subtilis (strain 168).